A 495-amino-acid chain; its full sequence is MKSQLLSLAVAVTTISQGVVGQEPFGWPFKPMVTQDDLQNKIKLKDIMAGVEKLQSFSDAHPEKNRVFGGNGHKDTVEWIYNEIKATGYYDVKKQEQVHLWSHAEAAVSANGKELKASAMSYSPPASKIMAELVVAKNNGCNATDYPENTQGKIVLVERGVCSFGEKSSQAGDAKAAGAIVYNNVPGSLAGTLGGLDKRHVPTAGLSQEDGKNLATLIASGKVDVTMNVISLFENRTTWNVIAETKGGDHNNVVMLGAHSDSVDAGPGINDNGSGSIGIMTVAKALTNFKLNNAVRFAWWTAEEFGLLGSTFYVNSLDDRELHKVKLYLNFDMIGSPNFANQIYDGDGSAYNMTGPAGSAEIEYLFEKFFDDQGIPHQPTAFTGRSDYSAFIKRNVPAGGLFTGAEVVKTPEQVKLFGGEAGVAYDKNYHGKGDTVANINKGAIFLNTRAIAYAIAEYARSLKGFPTRPKTGKRDVNPQYSKMPGGGCGHHTVFM.

The signal sequence occupies residues 1 to 21; that stretch reads MKSQLLSLAVAVTTISQGVVG. In terms of domain architecture, PA spans 130–216; sequence MAELVVAKNN…SQEDGKNLAT (87 aa). N-linked (GlcNAc...) asparagine glycosylation is found at Asn142 and Asn235. 2 residues coordinate Zn(2+): His259 and Asp271. Asn272 carries an N-linked (GlcNAc...) asparagine glycan. The active-site Proton acceptor is the Glu303. 2 residues coordinate Zn(2+): Glu304 and Asp332. A glycan (N-linked (GlcNAc...) asparagine) is linked at Asn352. A Zn(2+)-binding site is contributed by His430.

Belongs to the peptidase M28 family. M28A subfamily. Monomer. Requires Zn(2+) as cofactor.

The protein localises to the secreted. Its function is as follows. Extracellular aminopeptidase that releases a wide variety of amino acids from natural peptides and contributes to pathogenicity. The chain is Probable leucine aminopeptidase 2 (LAP2) from Arthroderma benhamiae (strain ATCC MYA-4681 / CBS 112371) (Trichophyton mentagrophytes).